The chain runs to 733 residues: Vinexin (733 aa).

Disordered regions lie at residues 1-51 (MARI…SNLD), 129-165 (TWPGPGSRPSMSPKPPASQHAQNWSATWTKDSKRQDK), 224-285 (SARA…NQVP), and 352-448 (ETRL…KRKA). The segment covering 32–42 (DPNRVHTKEQL) has biased composition (basic and acidic residues). A compositionally biased stretch (polar residues) spans 147 to 157 (QHAQNWSATWT). Residues 164-232 (DKRWVKYEGI…VSARASSAEP (69 aa)) form the SoHo domain. 2 stretches are compositionally biased toward polar residues: residues 245-256 (PGTTETSSGRNW) and 264-277 (RNTFNYNFRPSSSG). 2 positions are modified to phosphoserine: Ser-412 and Ser-459. SH3 domains follow at residues 444–503 (KKRK…VLPA) and 518–579 (LEYG…INRE). Positions 444-579 (KKRKAARLKF…PASYVQINRE (136 aa)) are binds to vinculin. Positions 584–672 (LCDDGPQLPA…INLGPSSPNT (89 aa)) are disordered. Ser-594 bears the Phosphoserine; by MAPK1 mark. Low complexity predominate over residues 597–613 (PTTTAHLSSHSHPSSIP). Residues Ser-607, Ser-610, and Ser-624 each carry the phosphoserine modification. The segment covering 638 to 651 (EPRSQTQSLNTPGP) has biased composition (polar residues). One can recognise an SH3 3 domain in the interval 674 to 733 (IHWTPYRAMYQYRPQNEDELELREGDRVDVMQQCDDGWFVGVSRRTQKFGTFPGNYVAPV). A binds to SOS region spans residues 674–733 (IHWTPYRAMYQYRPQNEDELELREGDRVDVMQQCDDGWFVGVSRRTQKFGTFPGNYVAPV).

As to quaternary structure, interacts with vinculin by the first two SH3 domains and the proline rich region of vinculin. Binds to SOS (guanine nucleotide exchange factor of RAS and RAC), through its third SH3 domain. The formation of this complex is down-regulated by phosphorylation of SOS. Interacts with SAFB2, INPPL1/SHIP2 and SRCIN1. Interacts with DLG5 through its third SH3 domain. Interacts with SOCS7 and MAPK1/ERK2. Interacts with FASLG. In terms of processing, phosphorylated at Ser-594 by MAPK1/ERK2 during cell spreading.

The protein resides in the cell junction. It is found in the focal adhesion. The protein localises to the cytoplasm. It localises to the cytoskeleton. Functionally, promotes up-regulation of actin stress fiber formation. The sequence is that of Vinexin (Sorbs3) from Mus musculus (Mouse).